Consider the following 1204-residue polypeptide: E3 ubiquitin-protein ligase DZIP3 (1204 aa).

Disordered regions lie at residues 1–22 (MDSL…QTKE) and 640–681 (SIPS…EQVS). Residues 649–658 (SVKDLQEVKS) show a composition bias toward basic and acidic residues. Positions 659–668 (KTKKKKRTKS) are enriched in basic residues. Coiled coils occupy residues 746–861 (KETE…TSRA) and 906–941 (QLKA…KVKQ). The segment covering 1088 to 1098 (PKKSESEEKSA) has biased composition (basic and acidic residues). The segment at 1088 to 1141 (PKKSESEEKSAQDGNNASPSHTASQPNAPQDPKSAQGSATWEGDKDMDNEEEEE) is disordered. The segment covering 1099–1126 (QDGNNASPSHTASQPNAPQDPKSAQGSA) has biased composition (polar residues). Positions 1132-1141 (KDMDNEEEEE) are enriched in acidic residues. The RING-type; atypical zinc-finger motif lies at 1144–1184 (CVICHENLSPENLSVLPCAHKFHSQCIRPWLMQQGTCPTCR).

In terms of assembly, probably interacts with DAZL.

Its subcellular location is the cytoplasm. It carries out the reaction S-ubiquitinyl-[E2 ubiquitin-conjugating enzyme]-L-cysteine + [acceptor protein]-L-lysine = [E2 ubiquitin-conjugating enzyme]-L-cysteine + N(6)-ubiquitinyl-[acceptor protein]-L-lysine.. The protein operates within protein modification; protein ubiquitination. Functionally, E3 Ubiquitin ligase proteins mediate ubiquitination and subsequent proteasomal degradation of target proteins. E3 ubiquitin ligases accept ubiquitin from an E2 ubiquitin-conjugating enzyme in the form of a thioester and then directly transfers the ubiquitin to targeted substrates. Able to specifically bind RNA. The protein is E3 ubiquitin-protein ligase DZIP3 (Dzip3) of Mus musculus (Mouse).